Consider the following 487-residue polypeptide: Glutamyl-tRNA(Gln) amidotransferase subunit A (487 aa).

Residues Lys75 and Ser150 each act as charge relay system in the active site. Ser174 acts as the Acyl-ester intermediate in catalysis.

It belongs to the amidase family. GatA subfamily. Heterotrimer of A, B and C subunits.

It carries out the reaction L-glutamyl-tRNA(Gln) + L-glutamine + ATP + H2O = L-glutaminyl-tRNA(Gln) + L-glutamate + ADP + phosphate + H(+). Its function is as follows. Allows the formation of correctly charged Gln-tRNA(Gln) through the transamidation of misacylated Glu-tRNA(Gln) in organisms which lack glutaminyl-tRNA synthetase. The reaction takes place in the presence of glutamine and ATP through an activated gamma-phospho-Glu-tRNA(Gln). The polypeptide is Glutamyl-tRNA(Gln) amidotransferase subunit A (Syntrophomonas wolfei subsp. wolfei (strain DSM 2245B / Goettingen)).